The primary structure comprises 400 residues: Subtilisin-like protease CPC735_013700 (400 aa).

A signal peptide spans Met1–Ala19. Positions Ala20–Ser116 are excised as a propeptide. The region spanning Tyr36 to Ile115 is the Inhibitor I9 domain. One can recognise a Peptidase S8 domain in the interval Ser126–Lys400. Catalysis depends on charge relay system residues Asp161 and His192. Asn252 is a glycosylation site (N-linked (GlcNAc...) asparagine). Ser346 functions as the Charge relay system in the catalytic mechanism. Asn396 carries N-linked (GlcNAc...) asparagine glycosylation.

The protein belongs to the peptidase S8 family.

Its subcellular location is the secreted. Secreted subtilisin-like serine protease with keratinolytic activity that contributes to pathogenicity. This is Subtilisin-like protease CPC735_013700 from Coccidioides posadasii (strain C735) (Valley fever fungus).